A 321-amino-acid chain; its full sequence is Zinc finger protein 524 (321 aa).

Composition is skewed to polar residues over residues 1 to 14 and 39 to 48; these read MDNPSSDPLPSTLS and ATTSNRTLKS. 2 disordered regions span residues 1-80 and 86-105; these read MDNP…DLLL and VPYTVPEGSAADGPQGSGSK. Residues 49–59 constitute a DNA-binding region (a.T hook); that stretch reads SLPRKRGRPPR. 4 C2H2-type zinc fingers span residues 109–131, 137–159, 165–187, and 193–216; these read HFCPVCLRAFPYLSDLERHSISH, HVCKDCGKTFKRSSHLRRHCNIH, FRCVLCPRRFREAGELAHHHRIH, and YQCPSCRVRFTEANTLRRHYKRKH. A disordered region spans residues 248–321; sequence GVQEESPEGK…PGAIGHPPVD (74 aa). The segment covering 262 to 271 has biased composition (polar residues); the sequence is PISSTTSPLS. Gly residues predominate over residues 274–285; sequence TAGGSAGAGRGQ.

This sequence belongs to the krueppel C2H2-type zinc-finger protein family.

The protein resides in the nucleus. In terms of biological role, may be involved in transcriptional regulation. The chain is Zinc finger protein 524 (Znf524) from Mus musculus (Mouse).